The primary structure comprises 431 residues: MSTIIDVYAREVLDSRGNPTVEVEVYTESGAFGRAIVPSGASTGEHEAVELRDGDKSRYLGKGVVNAVNNVNEIIAPEIAGFDVTDQAGIDRAMIELDGTPNKGKLGANAILGVSMAVAHAAADFVGLPLYRYLGGFNAKQLPTPMMNIINGGSHADNNVDFQEFMILPVGAPTFKESIRMGAEVFHALKAVLHDKGLNTAVGDEGGFAPNLGSNREALEVIIEAIEKAGYKAGENVFLGMDVASSEFYNKETGKYDLAGEGRTGLTSAEMVDFYEELCKDFPIISIEDGLDENDWDGHKLLTERIGDKVQLVGDDLFVTNTQKLAEGIEKGISNSILIKVNQIGTLTETFEAIEMAKRAGYTAVVSHRSGETEDATIADIAVATNAGQIKTGSMSRTDRIAKYNQLLRIEDELGEVAVYDGVKSFYNIKR.

Glutamine 163 contributes to the (2R)-2-phosphoglycerate binding site. Glutamate 205 (proton donor) is an active-site residue. Mg(2+) contacts are provided by aspartate 242, glutamate 288, and aspartate 315. Residues lysine 340, arginine 369, serine 370, and lysine 391 each coordinate (2R)-2-phosphoglycerate. The active-site Proton acceptor is lysine 340.

This sequence belongs to the enolase family. Requires Mg(2+) as cofactor.

The protein localises to the cytoplasm. It is found in the secreted. The protein resides in the cell surface. It carries out the reaction (2R)-2-phosphoglycerate = phosphoenolpyruvate + H2O. The protein operates within carbohydrate degradation; glycolysis; pyruvate from D-glyceraldehyde 3-phosphate: step 4/5. Its function is as follows. Catalyzes the reversible conversion of 2-phosphoglycerate (2-PG) into phosphoenolpyruvate (PEP). It is essential for the degradation of carbohydrates via glycolysis. The chain is Enolase from Bacillus cereus (strain B4264).